The following is a 371-amino-acid chain: Pyruvate dehydrogenase E1 component subunit alpha (371 aa).

As to quaternary structure, heterodimer of an alpha and a beta chain. The cofactor is thiamine diphosphate.

It carries out the reaction N(6)-[(R)-lipoyl]-L-lysyl-[protein] + pyruvate + H(+) = N(6)-[(R)-S(8)-acetyldihydrolipoyl]-L-lysyl-[protein] + CO2. Functionally, the pyruvate dehydrogenase complex catalyzes the overall conversion of pyruvate to acetyl-CoA and CO(2). It contains multiple copies of three enzymatic components: pyruvate dehydrogenase (E1), dihydrolipoamide acetyltransferase (E2) and lipoamide dehydrogenase (E3). The protein is Pyruvate dehydrogenase E1 component subunit alpha of Bacillus cereus.